Here is a 176-residue protein sequence, read N- to C-terminus: Probable inosine/xanthosine triphosphatase (176 aa).

Asp36 serves as a coordination point for Mg(2+).

This sequence belongs to the YjjX NTPase family. Homodimer. The cofactor is Mg(2+). Mn(2+) is required as a cofactor.

The enzyme catalyses XTP + H2O = XDP + phosphate + H(+). The catalysed reaction is ITP + H2O = IDP + phosphate + H(+). In terms of biological role, phosphatase that hydrolyzes non-canonical purine nucleotides such as XTP and ITP to their respective diphosphate derivatives. Probably excludes non-canonical purines from DNA/RNA precursor pool, thus preventing their incorporation into DNA/RNA and avoiding chromosomal lesions. The sequence is that of Probable inosine/xanthosine triphosphatase from Saccharolobus islandicus (strain M.14.25 / Kamchatka #1) (Sulfolobus islandicus).